A 303-amino-acid chain; its full sequence is Heme A synthase (303 aa).

The Cytoplasmic portion of the chain corresponds to 1-8 (MFGKKNLK). Residues 9–29 (WLGVVATLMMTFVQLGGALVT) traverse the membrane as a helical segment. The Extracellular segment spans residues 30–67 (KTGSADGCGSSWPLCHGALIPEFFPIDTIIELSHRAVS). An intrachain disulfide couples C37 to C44. E60 is an active-site residue. H63 provides a ligand contact to heme o. The chain crosses the membrane as a helical span at residues 68-88 (ALSLLMVLWLVITAWKHIGYI). Topologically, residues 89–93 (KEIKP) are cytoplasmic. Residues 94 to 114 (LSIISVGFLLLQALIGAAAVI) traverse the membrane as a helical segment. Topologically, residues 115–125 (WQQNDYVLALH) are extracellular. H125 lines the heme o pocket. Residues 126-146 (FGISLISFSSVFLITLIIFSI) form a helical membrane-spanning segment. Residues 147–163 (DQKYEADELYIKKPLRR) lie on the Cytoplasmic side of the membrane. The chain crosses the membrane as a helical span at residues 164 to 184 (LTWLMAIIIYCGVYTGALVRH). Residues 185–215 (ADASLAYGGWPLPFHDLVPHSEQDWVQLTHR) lie on the Extracellular side of the membrane. Residue H214 participates in heme b binding. A helical transmembrane segment spans residues 216–236 (IMAFIVFTIIMITYIHAVKNY). Over 237-244 (PNNRTVHY) the chain is Cytoplasmic. Residues 245–265 (GYTAAFILVILQVITGALSIM) form a helical membrane-spanning segment. Residues 266–270 (TNVNL) lie on the Extracellular side of the membrane. A helical transmembrane segment spans residues 271-291 (IIALFHALFITYLFGMTTYFI). H276 lines the heme b pocket. The Cytoplasmic segment spans residues 292 to 303 (MLMLRSVRSDKQ).

Belongs to the COX15/CtaA family. Type 1 subfamily. As to quaternary structure, interacts with CtaB. Requires heme b as cofactor.

The protein resides in the cell membrane. The enzyme catalyses Fe(II)-heme o + 2 A + H2O = Fe(II)-heme a + 2 AH2. The protein operates within porphyrin-containing compound metabolism; heme A biosynthesis; heme A from heme O: step 1/1. Functionally, catalyzes the conversion of heme O to heme A by two successive hydroxylations of the methyl group at C8. The first hydroxylation forms heme I, the second hydroxylation results in an unstable dihydroxymethyl group, which spontaneously dehydrates, resulting in the formyl group of heme A. The polypeptide is Heme A synthase (Staphylococcus aureus (strain Mu3 / ATCC 700698)).